Here is a 371-residue protein sequence, read N- to C-terminus: Protein disulfide isomerase-like 2-2 (371 aa).

Residues 1 to 27 form the signal peptide; the sequence is MAIPRISPRKTLPLFAALALALAWAFA. Thioredoxin domains are found at residues 28 to 143 and 147 to 262; these read APAF…TEGG and KLAT…EKCG. Active-site nucleophile residues include cysteine 64, cysteine 67, cysteine 183, and cysteine 186. Cystine bridges form between cysteine 64/cysteine 67 and cysteine 183/cysteine 186.

The protein belongs to the protein disulfide isomerase family.

The protein resides in the secreted. It catalyses the reaction Catalyzes the rearrangement of -S-S- bonds in proteins.. Its function is as follows. Acts as a protein-folding catalyst that interacts with nascent polypeptides to catalyze the formation, isomerization, and reduction or oxidation of disulfide bonds. May play a role in storage protein biogenesis. This Oryza sativa subsp. japonica (Rice) protein is Protein disulfide isomerase-like 2-2 (PDIL2-2).